The sequence spans 216 residues: Adenylate kinase (216 aa).

Gly10–Thr15 is an ATP binding site. The NMP stretch occupies residues Ser30–Val59. AMP-binding positions include Thr31, Arg36, Gly57–Val59, Gly85–Arg88, and Gln92. An LID region spans residues Gly122–Asp159. ATP-binding positions include Arg123 and Val132 to Tyr133. Positions 156 and 167 each coordinate AMP. Gly202 contacts ATP.

The protein belongs to the adenylate kinase family. As to quaternary structure, monomer.

It is found in the cytoplasm. The enzyme catalyses AMP + ATP = 2 ADP. It participates in purine metabolism; AMP biosynthesis via salvage pathway; AMP from ADP: step 1/1. Catalyzes the reversible transfer of the terminal phosphate group between ATP and AMP. Plays an important role in cellular energy homeostasis and in adenine nucleotide metabolism. This is Adenylate kinase from Pseudomonas fluorescens (strain Pf0-1).